A 470-amino-acid chain; its full sequence is Pyruvate kinase I (470 aa).

Residue Arg32 participates in substrate binding. Asn34, Ser36, Asp66, and Thr67 together coordinate K(+). 34–37 (NFSH) is a binding site for ATP. ATP contacts are provided by Arg73 and Lys156. Residue Glu222 participates in Mg(2+) binding. The substrate site is built by Gly245, Asp246, and Thr278. Asp246 provides a ligand contact to Mg(2+).

Belongs to the pyruvate kinase family. As to quaternary structure, homotetramer. Mg(2+) serves as cofactor. K(+) is required as a cofactor.

It catalyses the reaction pyruvate + ATP = phosphoenolpyruvate + ADP + H(+). It functions in the pathway carbohydrate degradation; glycolysis; pyruvate from D-glyceraldehyde 3-phosphate: step 5/5. The sequence is that of Pyruvate kinase I (pykF) from Salmonella typhi.